The chain runs to 152 residues: Transcriptional repressor NrdR (152 aa).

A zinc finger lies at 3–34; it reads CPACQHNGTRVLDSRPVDEGRSIRRRRECESC. One can recognise an ATP-cone domain in the interval 49–139; it reads LIVVKKEGIR…VYRQFKDINV (91 aa).

This sequence belongs to the NrdR family. The cofactor is Zn(2+).

Negatively regulates transcription of bacterial ribonucleotide reductase nrd genes and operons by binding to NrdR-boxes. The chain is Transcriptional repressor NrdR from Bacillus licheniformis (strain ATCC 14580 / DSM 13 / JCM 2505 / CCUG 7422 / NBRC 12200 / NCIMB 9375 / NCTC 10341 / NRRL NRS-1264 / Gibson 46).